Consider the following 166-residue polypeptide: Glycine cleavage system H protein 3, mitochondrial (166 aa).

Residues Met-1–Phe-35 constitute a mitochondrion transit peptide. Residues Val-57–Lys-139 enclose the Lipoyl-binding domain. Position 98 is an N6-lipoyllysine (Lys-98). At Ser-141 the chain carries Phosphoserine.

This sequence belongs to the GcvH family. The glycine cleavage system is composed of four proteins: P, T, L and H. It depends on (R)-lipoate as a cofactor. Post-translationally, S-nitrosylated and/or glutathionylated at unknown positions in response to nitric oxide.

The protein localises to the mitochondrion. Its activity is regulated as follows. Inhibited by harpin, S-nitrosoglutathione (GSNO), nitric oxide, N-ethylmaleimide and 5,5'-dithiobis-(2-nitrobenzoic acid). The glycine decarboxylase (GDC) or glycine cleavage system catalyzes the degradation of glycine. The H protein shuttles the methylamine group of glycine from the P protein to the T protein. The polypeptide is Glycine cleavage system H protein 3, mitochondrial (GDH3) (Arabidopsis thaliana (Mouse-ear cress)).